Reading from the N-terminus, the 283-residue chain is Formamidopyrimidine-DNA glycosylase (283 aa).

P2 (schiff-base intermediate with DNA) is an active-site residue. E3 serves as the catalytic Proton donor. The active-site Proton donor; for beta-elimination activity is K58. Positions 100, 119, and 162 each coordinate DNA. The FPG-type zinc-finger motif lies at 247-283 (DVYGREGEPCRRAGCDGTVQRITQSGRSSFYCAQCQR). R273 (proton donor; for delta-elimination activity) is an active-site residue.

The protein belongs to the FPG family. In terms of assembly, monomer. Zn(2+) serves as cofactor.

It carries out the reaction Hydrolysis of DNA containing ring-opened 7-methylguanine residues, releasing 2,6-diamino-4-hydroxy-5-(N-methyl)formamidopyrimidine.. It catalyses the reaction 2'-deoxyribonucleotide-(2'-deoxyribose 5'-phosphate)-2'-deoxyribonucleotide-DNA = a 3'-end 2'-deoxyribonucleotide-(2,3-dehydro-2,3-deoxyribose 5'-phosphate)-DNA + a 5'-end 5'-phospho-2'-deoxyribonucleoside-DNA + H(+). Functionally, involved in base excision repair of DNA damaged by oxidation or by mutagenic agents. Acts as a DNA glycosylase that recognizes and removes damaged bases. Has a preference for oxidized purines, such as 7,8-dihydro-8-oxoguanine (8-oxoG). Has AP (apurinic/apyrimidinic) lyase activity and introduces nicks in the DNA strand. Cleaves the DNA backbone by beta-delta elimination to generate a single-strand break at the site of the removed base with both 3'- and 5'-phosphates. The sequence is that of Formamidopyrimidine-DNA glycosylase from Ruegeria pomeroyi (strain ATCC 700808 / DSM 15171 / DSS-3) (Silicibacter pomeroyi).